Reading from the N-terminus, the 131-residue chain is Fluoride-specific ion channel FluC 1 (131 aa).

Transmembrane regions (helical) follow at residues 4-24 (LALP…GAWL), 40-60 (HWGT…VLAL), 73-93 (LILL…TFAV), and 108-128 (LVLA…GVGL). The Na(+) site is built by glycine 83 and serine 86.

Belongs to the fluoride channel Fluc/FEX (TC 1.A.43) family.

Its subcellular location is the cell inner membrane. It carries out the reaction fluoride(in) = fluoride(out). Its activity is regulated as follows. Na(+) is not transported, but it plays an essential structural role and its presence is essential for fluoride channel function. Functionally, fluoride-specific ion channel. Important for reducing fluoride concentration in the cell, thus reducing its toxicity. The chain is Fluoride-specific ion channel FluC 1 from Prochlorococcus marinus (strain MIT 9313).